A 106-amino-acid polypeptide reads, in one-letter code: Putative membrane protein insertion efficiency factor (106 aa).

It belongs to the UPF0161 family.

Its subcellular location is the cell inner membrane. In terms of biological role, could be involved in insertion of integral membrane proteins into the membrane. The chain is Putative membrane protein insertion efficiency factor from Methylacidiphilum infernorum (isolate V4) (Methylokorus infernorum (strain V4)).